The following is a 467-amino-acid chain: Uronate isomerase (467 aa).

It belongs to the metallo-dependent hydrolases superfamily. Uronate isomerase family.

The catalysed reaction is D-glucuronate = D-fructuronate. The enzyme catalyses aldehydo-D-galacturonate = keto-D-tagaturonate. It functions in the pathway carbohydrate metabolism; pentose and glucuronate interconversion. This is Uronate isomerase from Streptococcus uberis (strain ATCC BAA-854 / 0140J).